A 255-amino-acid polypeptide reads, in one-letter code: Protein BEAN1 (255 aa).

Residues 37 to 57 form a helical membrane-spanning segment; sequence VLVASAVIGVVITLSCITIIV. Basic residues predominate over residues 69–90; sequence QRHHHRHRRHHHHHRHRRRRHR. 2 disordered regions span residues 69 to 109 and 160 to 255; these read QRHH…MPYA and DAPP…ERIV. Polar residues predominate over residues 193 to 206; the sequence is QRTQGQSRLHTVSM. Low complexity predominate over residues 217 to 226; sequence GTGSPSDLLP. Polar residues predominate over residues 234 to 243; that stretch reads PSNSQGSPIP. Over residues 244–255 the composition is skewed to pro residues; sequence TQAPMPSPERIV.

Interacts with NEDD4.

It is found in the membrane. The protein is Protein BEAN1 (Bean1) of Mus musculus (Mouse).